A 113-amino-acid chain; its full sequence is Cell cycle protein GpsB (113 aa).

A coiled-coil region spans residues 36–68 (LDMVIKDYSTFTQEIEALQAENIRLVQELDNAP).

The protein belongs to the GpsB family. Forms polymers through the coiled coil domains. Interacts with PBP1, MreC and EzrA.

The protein resides in the cytoplasm. Divisome component that associates with the complex late in its assembly, after the Z-ring is formed, and is dependent on DivIC and PBP2B for its recruitment to the divisome. Together with EzrA, is a key component of the system that regulates PBP1 localization during cell cycle progression. Its main role could be the removal of PBP1 from the cell pole after pole maturation is completed. Also contributes to the recruitment of PBP1 to the division complex. Not essential for septum formation. The sequence is that of Cell cycle protein GpsB from Listeria welshimeri serovar 6b (strain ATCC 35897 / DSM 20650 / CCUG 15529 / CIP 8149 / NCTC 11857 / SLCC 5334 / V8).